A 368-amino-acid polypeptide reads, in one-letter code: 3-dehydroquinate synthase (368 aa).

NAD(+) is bound by residues 69–74 (DGEAYK), 103–107 (GVIGD), 127–128 (TT), K140, and K149. 3 residues coordinate Zn(2+): E182, H245, and H262.

Belongs to the sugar phosphate cyclases superfamily. Dehydroquinate synthase family. Co(2+) is required as a cofactor. It depends on Zn(2+) as a cofactor. NAD(+) serves as cofactor.

It localises to the cytoplasm. The enzyme catalyses 7-phospho-2-dehydro-3-deoxy-D-arabino-heptonate = 3-dehydroquinate + phosphate. It participates in metabolic intermediate biosynthesis; chorismate biosynthesis; chorismate from D-erythrose 4-phosphate and phosphoenolpyruvate: step 2/7. Its function is as follows. Catalyzes the conversion of 3-deoxy-D-arabino-heptulosonate 7-phosphate (DAHP) to dehydroquinate (DHQ). This Pseudomonas paraeruginosa (strain DSM 24068 / PA7) (Pseudomonas aeruginosa (strain PA7)) protein is 3-dehydroquinate synthase.